The chain runs to 145 residues: Large ribosomal subunit protein bL19 (145 aa).

Positions 114–136 are enriched in basic and acidic residues; it reads IAEKMESPAAKATREAAKKEAKA. A disordered region spans residues 114-145; sequence IAEKMESPAAKATREAAKKEAKAAKKNAAPAE.

This sequence belongs to the bacterial ribosomal protein bL19 family.

Its function is as follows. This protein is located at the 30S-50S ribosomal subunit interface and may play a role in the structure and function of the aminoacyl-tRNA binding site. The sequence is that of Large ribosomal subunit protein bL19 from Methylocella silvestris (strain DSM 15510 / CIP 108128 / LMG 27833 / NCIMB 13906 / BL2).